The chain runs to 274 residues: MTQPAVYVVSDSTGETAELVTRAALSQFGQTPKFIHRFHHVDSSHMIEEIVDLVAVNNGIIVHTIVLESVREELNKTAQAFGVPIIDLFGPLLNQLEETYKIKPLSEPGRVRSMDEAYFNKVAAIEFAVENDDGRNPRGILQADYVLIGISRTSKTPLSQYLALKGLKIVNIPIVPEAQIPDELFEIDPKKIIGLKISKQKLTKIRQERLISIGLPGAGTYASNQRIDEELAIFNKLASKLNCFVLDVTNKAIEETANEILIHIGEIVDENLEL.

An ADP-binding site is contributed by 149-156 (GISRTSKT).

This sequence belongs to the pyruvate, phosphate/water dikinase regulatory protein family. PDRP subfamily.

It carries out the reaction N(tele)-phospho-L-histidyl/L-threonyl-[pyruvate, phosphate dikinase] + ADP = N(tele)-phospho-L-histidyl/O-phospho-L-threonyl-[pyruvate, phosphate dikinase] + AMP + H(+). The catalysed reaction is N(tele)-phospho-L-histidyl/O-phospho-L-threonyl-[pyruvate, phosphate dikinase] + phosphate + H(+) = N(tele)-phospho-L-histidyl/L-threonyl-[pyruvate, phosphate dikinase] + diphosphate. Its function is as follows. Bifunctional serine/threonine kinase and phosphorylase involved in the regulation of the pyruvate, phosphate dikinase (PPDK) by catalyzing its phosphorylation/dephosphorylation. The chain is Putative pyruvate, phosphate dikinase regulatory protein 1 from Listeria monocytogenes serotype 4b (strain F2365).